Reading from the N-terminus, the 483-residue chain is Xylulose kinase (483 aa).

79 to 80 (MH) lines the substrate pocket.

It belongs to the FGGY kinase family.

The enzyme catalyses D-xylulose + ATP = D-xylulose 5-phosphate + ADP + H(+). In terms of biological role, catalyzes the phosphorylation of D-xylulose to D-xylulose 5-phosphate. The protein is Xylulose kinase of Staphylococcus xylosus.